Here is a 497-residue protein sequence, read N- to C-terminus: MTGTSNIPTHGKEHKDAPALLPLPAPNTHHTHAAHPGDPSHDRHPSRGKLFIKTHGCQMNEYDSAKMADVLTTTEALELTDNPEEADIILINTCSIREKAQEKVFSQLGRWRALKTNGRDVIIGVGGCVASQEGETIVKRAPYVDLVFGPQTLHRLPDMIRARREQNRPQVDISFPEIEKFDHLPTPRAEGPSAFVSIMEGCSKYCSFCVVPYTRGEEVSRPFEDVLTEIAHLATQGVREINLLGQNVNAYRGAMDPGPSNNTNPAPPPYADLGLLIRAIAQFESIGRIRFTTSHPLEFSDSLVEAYRDVPQLANHLHLPVQSGSDRILSAMKRGYTALEFKSKIRKLRAVRPDISISSDFIIGFPGESDTDFQKTMQLIKDIGFDQSFSFIYSRRPGTPASNLEDHTPDEIKRTRLEHLQKHINAYAADISKRMIGTVQTVLVEGPSKKNPNELTGKTENMRPVNFPGHPRLIGQFIDVHITEALTNSLRGRVHTN.

The disordered stretch occupies residues 1-48; the sequence is MTGTSNIPTHGKEHKDAPALLPLPAPNTHHTHAAHPGDPSHDRHPSRG. Positions 18–28 are enriched in low complexity; the sequence is PALLPLPAPNT. The region spanning 48 to 165 is the MTTase N-terminal domain; the sequence is GKLFIKTHGC…LPDMIRARRE (118 aa). [4Fe-4S] cluster is bound by residues C57, C94, C128, C202, C206, and C209. The region spanning 188–430 is the Radical SAM core domain; sequence RAEGPSAFVS…QKHINAYAAD (243 aa). A TRAM domain is found at 433-496; it reads KRMIGTVQTV…TNSLRGRVHT (64 aa).

This sequence belongs to the methylthiotransferase family. MiaB subfamily. In terms of assembly, monomer. [4Fe-4S] cluster serves as cofactor.

The protein resides in the cytoplasm. It catalyses the reaction N(6)-dimethylallyladenosine(37) in tRNA + (sulfur carrier)-SH + AH2 + 2 S-adenosyl-L-methionine = 2-methylsulfanyl-N(6)-dimethylallyladenosine(37) in tRNA + (sulfur carrier)-H + 5'-deoxyadenosine + L-methionine + A + S-adenosyl-L-homocysteine + 2 H(+). Functionally, catalyzes the methylthiolation of N6-(dimethylallyl)adenosine (i(6)A), leading to the formation of 2-methylthio-N6-(dimethylallyl)adenosine (ms(2)i(6)A) at position 37 in tRNAs that read codons beginning with uridine. In Xylella fastidiosa (strain M23), this protein is tRNA-2-methylthio-N(6)-dimethylallyladenosine synthase.